A 278-amino-acid polypeptide reads, in one-letter code: Large ribosomal subunit protein uL2 (278 aa).

Disordered stretches follow at residues 26–57 and 225–278; these read RSTP…QGGG and VMNP…NKKR. Positions 258–278 are enriched in basic residues; that stretch reads RSPKKASNKYIVRRRKTNKKR.

The protein belongs to the universal ribosomal protein uL2 family. As to quaternary structure, part of the 50S ribosomal subunit. Forms a bridge to the 30S subunit in the 70S ribosome.

One of the primary rRNA binding proteins. Required for association of the 30S and 50S subunits to form the 70S ribosome, for tRNA binding and peptide bond formation. It has been suggested to have peptidyltransferase activity; this is somewhat controversial. Makes several contacts with the 16S rRNA in the 70S ribosome. This Streptomyces coelicolor (strain ATCC BAA-471 / A3(2) / M145) protein is Large ribosomal subunit protein uL2.